Reading from the N-terminus, the 321-residue chain is o-succinylbenzoate synthase (321 aa).

Lys-110 (proton donor) is an active-site residue. Mg(2+) is bound by residues Asp-138, Glu-165, and Asp-188. Catalysis depends on Lys-212, which acts as the Proton acceptor.

Belongs to the mandelate racemase/muconate lactonizing enzyme family. MenC type 1 subfamily. It depends on a divalent metal cation as a cofactor.

The catalysed reaction is (1R,6R)-6-hydroxy-2-succinyl-cyclohexa-2,4-diene-1-carboxylate = 2-succinylbenzoate + H2O. Its pathway is quinol/quinone metabolism; 1,4-dihydroxy-2-naphthoate biosynthesis; 1,4-dihydroxy-2-naphthoate from chorismate: step 4/7. It participates in quinol/quinone metabolism; menaquinone biosynthesis. Functionally, converts 2-succinyl-6-hydroxy-2,4-cyclohexadiene-1-carboxylate (SHCHC) to 2-succinylbenzoate (OSB). The polypeptide is o-succinylbenzoate synthase (Mycolicibacterium smegmatis (strain ATCC 700084 / mc(2)155) (Mycobacterium smegmatis)).